The sequence spans 313 residues: Cytosolic Fe-S cluster assembly factor NUBP1 homolog (313 aa).

The tract at residues 1–25 (MSDVPEDANAGCPGTGSAGAGKASG) is disordered. [4Fe-4S] cluster-binding residues include C12, C26, C29, and C35. 66–73 (GKGGVGKS) is an ATP binding site. 2 residues coordinate [4Fe-4S] cluster: C240 and C243.

It belongs to the Mrp/NBP35 ATP-binding proteins family. NUBP1/NBP35 subfamily. As to quaternary structure, heterotetramer of 2 NUBP1 and 2 NUBP2 chains. It depends on [4Fe-4S] cluster as a cofactor.

Its subcellular location is the cytoplasm. It localises to the cell projection. In terms of biological role, component of the cytosolic iron-sulfur (Fe/S) protein assembly (CIA) machinery. Required for maturation of extramitochondrial Fe-S proteins. The NUBP1-NUBP2 heterotetramer forms a Fe-S scaffold complex, mediating the de novo assembly of an Fe-S cluster and its transfer to target apoproteins. Regulates cilium formation and structure. The polypeptide is Cytosolic Fe-S cluster assembly factor NUBP1 homolog (Caenorhabditis briggsae).